Consider the following 622-residue polypeptide: Chromosomal replication initiator protein DnaA (622 aa).

Positions 1–99 (MADVPADLAA…SAGEPPAPPA (99 aa)) are domain I, interacts with DnaA modulators. The tract at residues 88-282 (DDSAGEPPAP…APGPGEPHAR (195 aa)) is disordered. The interval 100 to 281 (PPMHQSHQGP…PAPGPGEPHA (182 aa)) is domain II. Composition is skewed to basic and acidic residues over residues 118 to 137 (QRDD…RPSD) and 176 to 210 (GYQD…EPWR). The segment covering 250–262 (PGGHGPGRTGGSV) has biased composition (gly residues). Positions 282–498 (RLNPKYLFDT…GALIRVTAFA (217 aa)) are domain III, AAA+ region. 4 residues coordinate ATP: G326, G328, K329, and T330. Residues 499–622 (SLNRQPVDLG…TELTNRIKNG (124 aa)) form a domain IV, binds dsDNA region.

Belongs to the DnaA family. In terms of assembly, oligomerizes as a right-handed, spiral filament on DNA at oriC.

It localises to the cytoplasm. In terms of biological role, plays an essential role in the initiation and regulation of chromosomal replication. ATP-DnaA binds to the origin of replication (oriC) to initiate formation of the DNA replication initiation complex once per cell cycle. Binds the DnaA box (a 9 base pair repeat at the origin) and separates the double-stranded (ds)DNA. Forms a right-handed helical filament on oriC DNA; dsDNA binds to the exterior of the filament while single-stranded (ss)DNA is stabiized in the filament's interior. The ATP-DnaA-oriC complex binds and stabilizes one strand of the AT-rich DNA unwinding element (DUE), permitting loading of DNA polymerase. After initiation quickly degrades to an ADP-DnaA complex that is not apt for DNA replication. Binds acidic phospholipids. This Streptomyces griseus subsp. griseus (strain JCM 4626 / CBS 651.72 / NBRC 13350 / KCC S-0626 / ISP 5235) protein is Chromosomal replication initiator protein DnaA.